The sequence spans 529 residues: Neuronal acetylcholine receptor subunit alpha-2 (529 aa).

Positions 1–26 (MGPSCPVFLSFTKLSLWWLLLTPAGG) are cleaved as a signal peptide. Residues 27–56 (EEAKRPPPRAPGDPLSSPSPTALPQGGSHT) are disordered. The Extracellular portion of the chain corresponds to 27 to 264 (EEAKRPPPRA…VTYAFIIRRL (238 aa)). 2 N-linked (GlcNAc...) asparagine glycosylation sites follow: N79 and N129. A disulfide bridge connects residues C183 and C197. N235 carries an N-linked (GlcNAc...) asparagine glycan. C247 and C248 are disulfide-bonded. 3 helical membrane passes run 265 to 289 (PLFYTINLIIPCLLISCLTVLVFYL), 297 to 315 (ITLCISVLLSLTVFLLLIT), and 331 to 352 (YLLFTMIFVTLSIVITVFVLNV). Residues 353 to 502 (HHRSPSTHTM…WKYVAMVIDR (150 aa)) lie on the Cytoplasmic side of the membrane. A helical transmembrane segment spans residues 503–521 (IFLWLFIIVCFLGTIGLFL).

It belongs to the ligand-gated ion channel (TC 1.A.9) family. Acetylcholine receptor (TC 1.A.9.1) subfamily. Alpha-2/CHRNA2 sub-subfamily. Neuronal AChR is composed of two different types of subunits: alpha and non-alpha (beta). CHRNA2/alpha-2 subunit can be combined to CHRNB2/beta-2 or CHRNB4/beta-4 to give rise to functional receptors. Both CHRNA2:CHRNB2 and CHRNA2:CHRNB4 nAChR complexes are heteropentamers with two subtypes: LS (low agonist sensitivity) with a (CHRNA2)3:(CHRNB2/4)2 and HS (high agonist sensitivity) with a (CHRNA2)2:(CHRNB2/4)3 stoichiometries; the subtypes differ in their subunit binding interfaces which are involved in ligand binding.

The protein localises to the synaptic cell membrane. The protein resides in the cell membrane. The enzyme catalyses Ca(2+)(in) = Ca(2+)(out). The catalysed reaction is K(+)(in) = K(+)(out). It carries out the reaction Na(+)(in) = Na(+)(out). Functionally, component of neuronal acetylcholine receptors (nAChRs) that function as pentameric, ligand-gated cation channels with high calcium permeability among other activities. nAChRs are excitatory neurotrasnmitter receptors formed by a collection of nAChR subunits known to mediate synaptic transmission in the nervous system and the neuromuscular junction. Each nAchR subunit confers differential attributes to channel properties, including activation, deactivation and desensitization kinetics, pH sensitivity, cation permeability, and binding to allosteric modulators. CHRNA2 forms heteropentameric neuronal acetylcholine receptors with CHRNB2 and CHRNB4 and plays a role in nicotine dependence. The polypeptide is Neuronal acetylcholine receptor subunit alpha-2 (CHRNA2) (Pan troglodytes (Chimpanzee)).